The chain runs to 385 residues: Homoserine O-succinyltransferase (385 aa).

Residues 46-355 (NAILICHALS…NSQHGHDAFL (310 aa)) enclose the AB hydrolase-1 domain. Ser151 (nucleophile) is an active-site residue. Arg221 serves as a coordination point for substrate. Catalysis depends on residues Asp318 and His351. A substrate-binding site is contributed by Asp352.

The protein belongs to the AB hydrolase superfamily. MetX family. In terms of assembly, homodimer.

It is found in the cytoplasm. The catalysed reaction is L-homoserine + succinyl-CoA = O-succinyl-L-homoserine + CoA. It functions in the pathway amino-acid biosynthesis; L-methionine biosynthesis via de novo pathway; O-succinyl-L-homoserine from L-homoserine: step 1/1. Transfers a succinyl group from succinyl-CoA to L-homoserine, forming succinyl-L-homoserine. The polypeptide is Homoserine O-succinyltransferase (Hydrogenovibrio crunogenus (strain DSM 25203 / XCL-2) (Thiomicrospira crunogena)).